The primary structure comprises 138 residues: D-ribose pyranase (138 aa).

Residue H20 is the Proton donor of the active site. Residues D28, H105, and 127 to 129 each bind substrate; that span reads YAN.

Belongs to the RbsD / FucU family. RbsD subfamily. Homodecamer.

It is found in the cytoplasm. It carries out the reaction beta-D-ribopyranose = beta-D-ribofuranose. It functions in the pathway carbohydrate metabolism; D-ribose degradation; D-ribose 5-phosphate from beta-D-ribopyranose: step 1/2. Functionally, catalyzes the interconversion of beta-pyran and beta-furan forms of D-ribose. In Psychromonas ingrahamii (strain DSM 17664 / CCUG 51855 / 37), this protein is D-ribose pyranase.